Consider the following 314-residue polypeptide: 4-hydroxy-3-methylbut-2-enyl diphosphate reductase (314 aa).

C12 contacts [4Fe-4S] cluster. (2E)-4-hydroxy-3-methylbut-2-enyl diphosphate contacts are provided by H41 and H74. Residues H41 and H74 each contribute to the dimethylallyl diphosphate site. H41 and H74 together coordinate isopentenyl diphosphate. C96 serves as a coordination point for [4Fe-4S] cluster. Residue H124 coordinates (2E)-4-hydroxy-3-methylbut-2-enyl diphosphate. Residue H124 coordinates dimethylallyl diphosphate. H124 is a binding site for isopentenyl diphosphate. E126 serves as the catalytic Proton donor. Residue T167 participates in (2E)-4-hydroxy-3-methylbut-2-enyl diphosphate binding. C197 contributes to the [4Fe-4S] cluster binding site. (2E)-4-hydroxy-3-methylbut-2-enyl diphosphate is bound by residues S225, S226, N227, and S269. Positions 225, 226, 227, and 269 each coordinate dimethylallyl diphosphate. S225, S226, N227, and S269 together coordinate isopentenyl diphosphate.

It belongs to the IspH family. It depends on [4Fe-4S] cluster as a cofactor.

The enzyme catalyses isopentenyl diphosphate + 2 oxidized [2Fe-2S]-[ferredoxin] + H2O = (2E)-4-hydroxy-3-methylbut-2-enyl diphosphate + 2 reduced [2Fe-2S]-[ferredoxin] + 2 H(+). The catalysed reaction is dimethylallyl diphosphate + 2 oxidized [2Fe-2S]-[ferredoxin] + H2O = (2E)-4-hydroxy-3-methylbut-2-enyl diphosphate + 2 reduced [2Fe-2S]-[ferredoxin] + 2 H(+). It functions in the pathway isoprenoid biosynthesis; dimethylallyl diphosphate biosynthesis; dimethylallyl diphosphate from (2E)-4-hydroxy-3-methylbutenyl diphosphate: step 1/1. The protein operates within isoprenoid biosynthesis; isopentenyl diphosphate biosynthesis via DXP pathway; isopentenyl diphosphate from 1-deoxy-D-xylulose 5-phosphate: step 6/6. In terms of biological role, catalyzes the conversion of 1-hydroxy-2-methyl-2-(E)-butenyl 4-diphosphate (HMBPP) into a mixture of isopentenyl diphosphate (IPP) and dimethylallyl diphosphate (DMAPP). Acts in the terminal step of the DOXP/MEP pathway for isoprenoid precursor biosynthesis. This is 4-hydroxy-3-methylbut-2-enyl diphosphate reductase from Psychromonas ingrahamii (strain DSM 17664 / CCUG 51855 / 37).